The sequence spans 695 residues: Elongation factor G (695 aa).

Residues 12–286 (DKIRNIGIMA…AVIDYLPSPL (275 aa)) form the tr-type G domain. Residues 21-28 (AHIDAGKT), 85-89 (DTPGH), and 139-142 (NKMD) each bind GTP.

Belongs to the TRAFAC class translation factor GTPase superfamily. Classic translation factor GTPase family. EF-G/EF-2 subfamily.

The protein localises to the cytoplasm. Catalyzes the GTP-dependent ribosomal translocation step during translation elongation. During this step, the ribosome changes from the pre-translocational (PRE) to the post-translocational (POST) state as the newly formed A-site-bound peptidyl-tRNA and P-site-bound deacylated tRNA move to the P and E sites, respectively. Catalyzes the coordinated movement of the two tRNA molecules, the mRNA and conformational changes in the ribosome. The protein is Elongation factor G of Thermotoga neapolitana (strain ATCC 49049 / DSM 4359 / NBRC 107923 / NS-E).